A 214-amino-acid chain; its full sequence is tRNA (guanine-N(7)-)-methyltransferase (214 aa).

S-adenosyl-L-methionine contacts are provided by Glu-43, Glu-68, Asp-95, and Asp-117. Asp-117 is a catalytic residue. Substrate-binding positions include Lys-121, Asp-153, and 190-193 (TEYE).

The protein belongs to the class I-like SAM-binding methyltransferase superfamily. TrmB family.

It catalyses the reaction guanosine(46) in tRNA + S-adenosyl-L-methionine = N(7)-methylguanosine(46) in tRNA + S-adenosyl-L-homocysteine. It functions in the pathway tRNA modification; N(7)-methylguanine-tRNA biosynthesis. Its function is as follows. Catalyzes the formation of N(7)-methylguanine at position 46 (m7G46) in tRNA. The chain is tRNA (guanine-N(7)-)-methyltransferase from Staphylococcus aureus (strain Mu3 / ATCC 700698).